The primary structure comprises 277 residues: Histone-lysine N-methyltransferase set-17 (277 aa).

The region spanning 135–246 (FRIEESKLPN…INQELLVWYG (112 aa)) is the SET domain. Y245 provides a ligand contact to S-adenosyl-L-methionine.

It belongs to the class V-like SAM-binding methyltransferase superfamily. In terms of tissue distribution, expressed in the germline. Predominantly expressed in primary spermatocytes. Also expressed in the oocyte-producing germline of hermaphrodites.

It localises to the nucleus. The catalysed reaction is N(6)-methyl-L-lysyl(4)-[histone H3] + S-adenosyl-L-methionine = N(6),N(6)-dimethyl-L-lysyl(4)-[histone H3] + S-adenosyl-L-homocysteine + H(+). It catalyses the reaction L-lysyl(4)-[histone H3] + S-adenosyl-L-methionine = N(6)-methyl-L-lysyl(4)-[histone H3] + S-adenosyl-L-homocysteine + H(+). In terms of biological role, histone methyltransferase that specifically mono- and di-methylates 'Lys-4' of histone H3 in vitro. Does not tri-methylate 'Lys-4' of histone H3 in vitro. Promotes spermatid development and fertility by positively regulating the transcription of spermatocyte-specific genes in primary spermatocytes. Together with spr-5, required for transgenerational fertility. This chain is Histone-lysine N-methyltransferase set-17, found in Caenorhabditis elegans.